A 374-amino-acid chain; its full sequence is Large ribosomal subunit protein bL27m (374 aa).

Residues Met-1–His-41 constitute a mitochondrion transit peptide.

This sequence belongs to the bacterial ribosomal protein bL27 family.

It is found in the mitochondrion. Its function is as follows. Component of the large subunit of mitochondrial ribosome. The polypeptide is Large ribosomal subunit protein bL27m (MRPL2) (Yarrowia lipolytica (strain CLIB 122 / E 150) (Yeast)).